Consider the following 206-residue polypeptide: Large ribosomal subunit protein uL4 (206 aa).

The interval 43 to 78 is disordered; it reads ARSGNRKQKDREEVHHTTKKPWRQKGTGRARAGMSS. The segment covering 49-58 has biased composition (basic and acidic residues); sequence KQKDREEVHH. Residues 59–70 show a composition bias toward basic residues; it reads TTKKPWRQKGTG.

This sequence belongs to the universal ribosomal protein uL4 family. In terms of assembly, part of the 50S ribosomal subunit.

In terms of biological role, one of the primary rRNA binding proteins, this protein initially binds near the 5'-end of the 23S rRNA. It is important during the early stages of 50S assembly. It makes multiple contacts with different domains of the 23S rRNA in the assembled 50S subunit and ribosome. Its function is as follows. Forms part of the polypeptide exit tunnel. The sequence is that of Large ribosomal subunit protein uL4 from Herminiimonas arsenicoxydans.